The primary structure comprises 230 residues: Large ribosomal subunit protein uL1 (230 aa).

This sequence belongs to the universal ribosomal protein uL1 family. Part of the 50S ribosomal subunit.

Binds directly to 23S rRNA. The L1 stalk is quite mobile in the ribosome, and is involved in E site tRNA release. Functionally, protein L1 is also a translational repressor protein, it controls the translation of the L11 operon by binding to its mRNA. The protein is Large ribosomal subunit protein uL1 of Bifidobacterium longum subsp. infantis (strain ATCC 15697 / DSM 20088 / JCM 1222 / NCTC 11817 / S12).